A 532-amino-acid polypeptide reads, in one-letter code: CTP synthase (532 aa).

Positions 1–268 (MTTKYIFVTG…DEIVCDHLNL (268 aa)) are amidoligase domain. S14 contacts CTP. S14 is a binding site for UTP. 15–20 (SLGKGI) contacts ATP. Position 55 (Y55) interacts with L-glutamine. D72 contributes to the ATP binding site. Residues D72 and E142 each contribute to the Mg(2+) site. CTP is bound by residues 149–151 (DIE), 189–194 (KSKPTQ), and K225. Residues 189–194 (KSKPTQ) and K225 each bind UTP. Residue 241 to 243 (RDA) coordinates ATP. One can recognise a Glutamine amidotransferase type-1 domain in the interval 293–532 (KIALVGKYVA…REFIQASLRK (240 aa)). G355 lines the L-glutamine pocket. C382 acts as the Nucleophile; for glutamine hydrolysis in catalysis. L-glutamine-binding positions include 383-386 (LGMQ), E406, and R463. Residues H508 and E510 contribute to the active site.

The protein belongs to the CTP synthase family. In terms of assembly, homotetramer.

It carries out the reaction UTP + L-glutamine + ATP + H2O = CTP + L-glutamate + ADP + phosphate + 2 H(+). It catalyses the reaction L-glutamine + H2O = L-glutamate + NH4(+). The enzyme catalyses UTP + NH4(+) + ATP = CTP + ADP + phosphate + 2 H(+). It participates in pyrimidine metabolism; CTP biosynthesis via de novo pathway; CTP from UDP: step 2/2. Its activity is regulated as follows. Allosterically activated by GTP, when glutamine is the substrate; GTP has no effect on the reaction when ammonia is the substrate. The allosteric effector GTP functions by stabilizing the protein conformation that binds the tetrahedral intermediate(s) formed during glutamine hydrolysis. Inhibited by the product CTP, via allosteric rather than competitive inhibition. Its function is as follows. Catalyzes the ATP-dependent amination of UTP to CTP with either L-glutamine or ammonia as the source of nitrogen. Regulates intracellular CTP levels through interactions with the four ribonucleotide triphosphates. This chain is CTP synthase, found in Halalkalibacterium halodurans (strain ATCC BAA-125 / DSM 18197 / FERM 7344 / JCM 9153 / C-125) (Bacillus halodurans).